The chain runs to 373 residues: DNA replication and repair protein RecF (373 aa).

Residue 30–37 (GENAQGKT) participates in ATP binding.

This sequence belongs to the RecF family.

The protein resides in the cytoplasm. Functionally, the RecF protein is involved in DNA metabolism; it is required for DNA replication and normal SOS inducibility. RecF binds preferentially to single-stranded, linear DNA. It also seems to bind ATP. The protein is DNA replication and repair protein RecF of Limosilactobacillus fermentum (strain NBRC 3956 / LMG 18251) (Lactobacillus fermentum).